An 883-amino-acid polypeptide reads, in one-letter code: Copper-transporting ATPase PAA2, chloroplastic (883 aa).

The N-terminal 65 residues, 1–65, are a transit peptide targeting the chloroplast; it reads MASNLLRFPL…TQSFESTESS (65 aa). An HMA domain is found at 76–146; sequence TPILLDVSGM…RLTESGFEAK (71 aa). Positions 87 and 90 each coordinate Cu cation. 6 helical membrane passes run 179-199, 209-229, 250-270, 274-294, 445-465, and 499-519; these read VAFA…HILH, GIWD…GALL, MNSL…ISLV, LEWD…VLLG, AIAG…FAFW, and VLVV…ILIG. Catalysis depends on Asp-548, which acts as the 4-aspartylphosphate intermediate. 761–768 is an ATP binding site; the sequence is GDGINDAP. Asp-762 and Asp-766 together coordinate Mg(2+). The next 2 membrane-spanning stretches (helical) occupy residues 822-842 and 846-866; these read LAWA…VLLP and FAMT…FVVS.

It belongs to the cation transport ATPase (P-type) (TC 3.A.3) family. Type IB subfamily. As to expression, expressed in the shoots only and not in the roots.

It localises to the plastid. The protein localises to the chloroplast thylakoid membrane. It catalyses the reaction Cu(2+)(in) + ATP + H2O = Cu(2+)(out) + ADP + phosphate + H(+). Mediates copper transfer across the chloroplast thylakoid membrane. Required for copper delivery into the thylakoids lumen, which is essential for the function of copper proteins. In Arabidopsis thaliana (Mouse-ear cress), this protein is Copper-transporting ATPase PAA2, chloroplastic (PAA2).